The chain runs to 139 residues: Acidic phospholipase A2 4 (139 aa).

Positions 1–16 (MRTLWIVAVWLVGVEG) are cleaved as a signal peptide. Cystine bridges form between Cys42–Cys131, Cys44–Cys60, Cys59–Cys111, Cys65–Cys139, Cys66–Cys104, Cys73–Cys97, and Cys91–Cys102. Ca(2+) is bound by residues Tyr43, Gly45, and Gly47. His63 is a catalytic residue. Asp64 lines the Ca(2+) pocket. Asp105 is an active-site residue.

The protein belongs to the phospholipase A2 family. Group II subfamily. D49 sub-subfamily. It depends on Ca(2+) as a cofactor. As to expression, expressed by the venom gland.

It localises to the secreted. It catalyses the reaction a 1,2-diacyl-sn-glycero-3-phosphocholine + H2O = a 1-acyl-sn-glycero-3-phosphocholine + a fatty acid + H(+). Functionally, PLA2 catalyzes the calcium-dependent hydrolysis of the 2-acyl groups in 3-sn-phosphoglycerides. This is Acidic phospholipase A2 4 from Echis carinatus sochureki (Saw-scaled viper).